A 293-amino-acid chain; its full sequence is MIETTDSLRDCLAPAKLNLFLHITGRRPDGYHTLQTVFQLLDWGDTLHFTRRDDGLITRRTEIADVPPEHDLTVRAATLLKTHTGSPEGVDIEIDKRLPMGAGLGGGSSNAATTLLALNRLWKLNLPRLELQALALKLGADVPFFVFGKNAFAQGVGEALDVVQLPPRHFLVVTPRVHVPTAAIFSEKALTRDSKPLTITDFPAELSCNTEWPESFGRNDMQQVVVGKYAEVAQVLRWFENVAPARMSGSGASVFAAFRSKAEAEAVQAKLPAEWNSAVAASLDQHPLFTFAS.

The active site involves Lys-16. ATP is bound at residue 99–109; it reads PMGAGLGGGSS. Asp-141 is an active-site residue.

The protein belongs to the GHMP kinase family. IspE subfamily.

It catalyses the reaction 4-CDP-2-C-methyl-D-erythritol + ATP = 4-CDP-2-C-methyl-D-erythritol 2-phosphate + ADP + H(+). The protein operates within isoprenoid biosynthesis; isopentenyl diphosphate biosynthesis via DXP pathway; isopentenyl diphosphate from 1-deoxy-D-xylulose 5-phosphate: step 3/6. Catalyzes the phosphorylation of the position 2 hydroxy group of 4-diphosphocytidyl-2C-methyl-D-erythritol. The polypeptide is 4-diphosphocytidyl-2-C-methyl-D-erythritol kinase (Paraburkholderia xenovorans (strain LB400)).